The chain runs to 109 residues: Flagellar hook-basal body complex protein FliE (109 aa).

This sequence belongs to the FliE family.

It is found in the bacterial flagellum basal body. In Pseudomonas syringae pv. tomato (strain ATCC BAA-871 / DC3000), this protein is Flagellar hook-basal body complex protein FliE.